A 145-amino-acid chain; its full sequence is uncharacterized protein (145 aa).

Residues 4–24 (IYMLVALLISSLVLFAGCVQN) form a helical membrane-spanning segment.

The protein localises to the membrane. This is an uncharacterized protein from Methanocaldococcus jannaschii (strain ATCC 43067 / DSM 2661 / JAL-1 / JCM 10045 / NBRC 100440) (Methanococcus jannaschii).